Reading from the N-terminus, the 145-residue chain is Immune protein Tsi3 (145 aa).

The signal sequence occupies residues 1-15 (MKTVALILASLALLA). C16 is lipidated: N-palmitoyl cysteine. A lipid anchor (S-diacylglycerol cysteine) is attached at C16. Residues 53–85 (FDEGGKLRNPRQLEVQRQDAPPPPDLASRRLGD) form a disordered region. E126 serves as a coordination point for Ca(2+).

In terms of assembly, forms a heterotetramer with Tse3 consisting of two Tse3 dimers and two Tsi3 dimers. Formation of the complex inactivates Tse3 enzymatic activity.

Immunity protein that plays a role in preventing early activation of toxin Tse3. Occupies Tse3 substrate binding site and prevents the substrate from entering. This chain is Immune protein Tsi3, found in Pseudomonas aeruginosa (strain ATCC 15692 / DSM 22644 / CIP 104116 / JCM 14847 / LMG 12228 / 1C / PRS 101 / PAO1).